The chain runs to 153 residues: Transcriptional repressor NrdR (153 aa).

The segment at 3 to 34 is a zinc-finger region; that stretch reads CPSCFHNGTRVLDSRPVDEGRSIRRRRECESC. The ATP-cone domain occupies 49–139; sequence LIVVKKEGTR…VYRQFKDLNV (91 aa).

Belongs to the NrdR family. The cofactor is Zn(2+).

In terms of biological role, negatively regulates transcription of bacterial ribonucleotide reductase nrd genes and operons by binding to NrdR-boxes. The chain is Transcriptional repressor NrdR from Bacillus mycoides (strain KBAB4) (Bacillus weihenstephanensis).